Here is a 166-residue protein sequence, read N- to C-terminus: NAD(P)H-quinone oxidoreductase subunit I, chloroplastic (166 aa).

4Fe-4S ferredoxin-type domains are found at residues 55–84 and 95–124; these read GRIHFEFDKCIACEVCVRVCPIDLPVVDWK and LNYSIDFGICIFCGNCVEYCPTNCLSMTEE. [4Fe-4S] cluster-binding residues include cysteine 64, cysteine 67, cysteine 70, cysteine 74, cysteine 104, cysteine 107, cysteine 110, and cysteine 114.

This sequence belongs to the complex I 23 kDa subunit family. NDH is composed of at least 16 different subunits, 5 of which are encoded in the nucleus. Requires [4Fe-4S] cluster as cofactor.

Its subcellular location is the plastid. The protein localises to the chloroplast thylakoid membrane. The enzyme catalyses a plastoquinone + NADH + (n+1) H(+)(in) = a plastoquinol + NAD(+) + n H(+)(out). The catalysed reaction is a plastoquinone + NADPH + (n+1) H(+)(in) = a plastoquinol + NADP(+) + n H(+)(out). Its function is as follows. NDH shuttles electrons from NAD(P)H:plastoquinone, via FMN and iron-sulfur (Fe-S) centers, to quinones in the photosynthetic chain and possibly in a chloroplast respiratory chain. The immediate electron acceptor for the enzyme in this species is believed to be plastoquinone. Couples the redox reaction to proton translocation, and thus conserves the redox energy in a proton gradient. This Bahiopsis tomentosa (Tecote) protein is NAD(P)H-quinone oxidoreductase subunit I, chloroplastic.